The primary structure comprises 358 residues: Methylthioribose-1-phosphate isomerase (358 aa).

Residues 54-56 (RGA), arginine 96, and glutamine 205 contribute to the substrate site. Catalysis depends on aspartate 246, which acts as the Proton donor. 256 to 257 (GK) lines the substrate pocket.

The protein belongs to the eIF-2B alpha/beta/delta subunits family. MtnA subfamily.

It catalyses the reaction 5-(methylsulfanyl)-alpha-D-ribose 1-phosphate = 5-(methylsulfanyl)-D-ribulose 1-phosphate. Its pathway is amino-acid biosynthesis; L-methionine biosynthesis via salvage pathway; L-methionine from S-methyl-5-thio-alpha-D-ribose 1-phosphate: step 1/6. Functionally, catalyzes the interconversion of methylthioribose-1-phosphate (MTR-1-P) into methylthioribulose-1-phosphate (MTRu-1-P). The protein is Methylthioribose-1-phosphate isomerase of Pseudomonas putida (strain ATCC 47054 / DSM 6125 / CFBP 8728 / NCIMB 11950 / KT2440).